The chain runs to 408 residues: Phosphoenolpyruvate/phosphate translocator 1, chloroplastic (408 aa).

The transit peptide at 1-85 (MQSSAVFSLS…SLDTNRFRTA (85 aa)) directs the protein to the chloroplast. Position 86 is an N-acetylalanine (A86). A run of 8 helical transmembrane segments spans residues 105–125 (VLEL…FNIY), 137–157 (MTVT…MWVL), 165–185 (ISGA…LGNL), 198–218 (FTHT…AMFL), 222–242 (PTPW…LASI), 283–303 (ITLF…VTFF), 324–346 (IYTK…YMIL), and 377–396 (VSPV…FLYS). The EamA domain maps to 124–241 (IYNKQVLKAL…PIVGGVALAS (118 aa)).

Belongs to the TPT transporter family. PPT (TC 2.A.7.9) subfamily. In terms of tissue distribution, expressed in root columella, lateral root cap and root vasculature tissue. In leaves, highly expressed in xylem parenchyma cells. In flowers, expressed in sepals, petals, filaments of the stamens, anthers and stigma.

It localises to the plastid. It is found in the chloroplast membrane. Phosphoenolpyruvate/phosphate translocator that transports phosphoenolpyruvate (PEP), 2-phosphoglycerate, 3-phosphoglycerate and dihydroxyacetone phosphate. Imports PEP to the chloroplast stroma as one substrate of the shikimate pathway, from which aromatic amino acids and a variety of secondary products derive. Required for correct leaf mesophyll cell development and expression of chlorophyll a/b binding protein 3 (CAB3). The chain is Phosphoenolpyruvate/phosphate translocator 1, chloroplastic (PPT1) from Arabidopsis thaliana (Mouse-ear cress).